A 543-amino-acid chain; its full sequence is Glutamyl-tRNA(Gln) amidotransferase subunit B-1, chloroplastic/mitochondrial (543 aa).

Positions 1 to 47 (MIRAGGPSPSPRGRRAGPIRLPRRAPSSTPTRAKTEEKASADASSRT) are disordered. Basic residues predominate over residues 12–23 (RGRRAGPIRLPR).

The protein belongs to the GatB/GatE family. GatB subfamily. As to quaternary structure, subunit of the heterotrimeric GatCAB amidotransferase (AdT) complex, composed of A, B and C subunits.

The protein localises to the mitochondrion. It localises to the plastid. It is found in the chloroplast. It carries out the reaction L-glutamyl-tRNA(Gln) + L-glutamine + ATP + H2O = L-glutaminyl-tRNA(Gln) + L-glutamate + ADP + phosphate + H(+). Its function is as follows. Allows the formation of correctly charged Gln-tRNA(Gln) through the transamidation of misacylated Glu-tRNA(Gln) in chloroplasts and mitochondria. The reaction takes place in the presence of glutamine and ATP through an activated gamma-phospho-Glu-tRNA(Gln). This Micromonas commoda (strain RCC299 / NOUM17 / CCMP2709) (Picoplanktonic green alga) protein is Glutamyl-tRNA(Gln) amidotransferase subunit B-1, chloroplastic/mitochondrial.